Consider the following 160-residue polypeptide: Endoribonuclease YbeY (160 aa).

Positions 124, 128, and 134 each coordinate Zn(2+).

It belongs to the endoribonuclease YbeY family. Zn(2+) serves as cofactor.

Its subcellular location is the cytoplasm. Single strand-specific metallo-endoribonuclease involved in late-stage 70S ribosome quality control and in maturation of the 3' terminus of the 16S rRNA. This is Endoribonuclease YbeY from Jannaschia sp. (strain CCS1).